Consider the following 66-residue polypeptide: Large ribosomal subunit protein bL31 (66 aa).

Residues cysteine 16, cysteine 18, cysteine 36, and cysteine 39 each coordinate Zn(2+).

This sequence belongs to the bacterial ribosomal protein bL31 family. Type A subfamily. Part of the 50S ribosomal subunit. Zn(2+) is required as a cofactor.

In terms of biological role, binds the 23S rRNA. The chain is Large ribosomal subunit protein bL31 from Geobacillus sp. (strain WCH70).